The sequence spans 173 residues: MDVTIQHPWFKRALGPFYPSRLFDQFFGEGLFEYDLLPFLSSTISPYYRQSLFRTVLDSGISEVRSDRDQFLILLDVKHFSPEELTVKVLDDFVEIHGKHNERQDDHGYISREFHRRYRLPSNVDQSALSCSLSADGMLTFCGPKVQSSMDDGHSERAIPVSREEKPSSVPSS.

Met-1 carries the post-translational modification N-acetylmethionine. Residues 1-63 (MDVTIQHPWF…RTVLDSGISE (63 aa)) are required for complex formation with BFSP1 and BFSP2. At Gln-6 the chain carries Deamidated glutamine; partial. Ser-45 carries the post-translational modification Phosphoserine. At Gln-50 the chain carries Deamidated glutamine; partial. The sHSP domain occupies 52–162 (LFRTVLDSGI…GHSERAIPVS (111 aa)). At Lys-99 the chain carries N6-acetyllysine. Position 100 (His-100) interacts with Zn(2+). A Deamidated asparagine; partial modification is found at Asn-101. 2 residues coordinate Zn(2+): Glu-102 and His-107. The residue at position 122 (Ser-122) is a Phosphoserine. Deamidated asparagine; partial is present on Asn-123. Cys-131 and Cys-142 are joined by a disulfide. Residues 146-173 (VQSSMDDGHSERAIPVSREEKPSSVPSS) form a disordered region. Residue Gln-147 is modified to Deamidated glutamine; partial. Residues 151-167 (DDGHSERAIPVSREEKP) show a composition bias toward basic and acidic residues. His-154 is a binding site for Zn(2+). A glycan (O-linked (GlcNAc) serine) is linked at Ser-162.

It belongs to the small heat shock protein (HSP20) family. Heteromer composed of three CRYAA and one CRYAB subunits. Inter-subunit bridging via zinc ions enhances stability, which is crucial as there is no protein turn over in the lens. Can also form homodimers and homotetramers (dimers of dimers) which serve as the building blocks of homooligomers. Within homooligomers, the zinc-binding motif is created from residues of 3 different molecules. His-100 and Glu-102 from one molecule are ligands of the zinc ion, and His-107 and His-154 residues from additional molecules complete the site with tetrahedral coordination geometry. Part of a complex required for lens intermediate filament formation composed of BFSP1, BFSP2 and CRYAA. Post-translationally, undergoes age-dependent proteolytical cleavage at the C-terminus.

It localises to the cytoplasm. The protein resides in the nucleus. Functionally, contributes to the transparency and refractive index of the lens. In its oxidized form (absence of intramolecular disulfide bond), acts as a chaperone, preventing aggregation of various proteins under a wide range of stress conditions. Required for the correct formation of lens intermediate filaments as part of a complex composed of BFSP1, BFSP2 and CRYAA. The polypeptide is Alpha-crystallin A chain (CRYAA) (Orycteropus afer (Aardvark)).